Reading from the N-terminus, the 195-residue chain is Xanthine phosphoribosyltransferase (195 aa).

Xanthine is bound by residues Leu-20 and Asn-27. Residue 128–132 coordinates 5-phospho-alpha-D-ribose 1-diphosphate; sequence ANGQA. Xanthine is bound at residue Lys-156.

The protein belongs to the purine/pyrimidine phosphoribosyltransferase family. Xpt subfamily. As to quaternary structure, homodimer.

It localises to the cytoplasm. The catalysed reaction is XMP + diphosphate = xanthine + 5-phospho-alpha-D-ribose 1-diphosphate. The protein operates within purine metabolism; XMP biosynthesis via salvage pathway; XMP from xanthine: step 1/1. Its function is as follows. Converts the preformed base xanthine, a product of nucleic acid breakdown, to xanthosine 5'-monophosphate (XMP), so it can be reused for RNA or DNA synthesis. This is Xanthine phosphoribosyltransferase from Lactiplantibacillus plantarum (strain ATCC BAA-793 / NCIMB 8826 / WCFS1) (Lactobacillus plantarum).